Consider the following 336-residue polypeptide: DNA-directed RNA polymerase subunit alpha (336 aa).

Residues Met-1–Asp-232 are alpha N-terminal domain (alpha-NTD). The segment at Phe-248 to Tyr-336 is alpha C-terminal domain (alpha-CTD).

The protein belongs to the RNA polymerase alpha chain family. As to quaternary structure, homodimer. The RNAP catalytic core consists of 2 alpha, 1 beta, 1 beta' and 1 omega subunit. When a sigma factor is associated with the core the holoenzyme is formed, which can initiate transcription.

It catalyses the reaction RNA(n) + a ribonucleoside 5'-triphosphate = RNA(n+1) + diphosphate. Functionally, DNA-dependent RNA polymerase catalyzes the transcription of DNA into RNA using the four ribonucleoside triphosphates as substrates. The sequence is that of DNA-directed RNA polymerase subunit alpha from Sinorhizobium medicae (strain WSM419) (Ensifer medicae).